The following is a 451-amino-acid chain: Cyclin-dependent kinase 18 (451 aa).

The tract at residues 39–61 (RNEDGRDEPGQLSPGVQYQQRQN) is disordered. Ser51 carries the post-translational modification Phosphoserine. Over residues 52–61 (PGVQYQQRQN) the composition is skewed to polar residues. A phosphoserine mark is found at Ser66 and Ser109. The Protein kinase domain maps to 121–402 (YVKLDKLGEG…AEAALSHPYF (282 aa)). Residues 127–135 (LGEGTYATV) and Lys150 contribute to the ATP site. The active-site Proton acceptor is Asp242. Residues Ser417 and Ser420 each carry the phosphoserine modification.

It belongs to the protein kinase superfamily. CMGC Ser/Thr protein kinase family. CDC2/CDKX subfamily. As to expression, in brain, kidney, intestine and at a much lower level, in fetal tissues.

The catalysed reaction is L-seryl-[protein] + ATP = O-phospho-L-seryl-[protein] + ADP + H(+). It carries out the reaction L-threonyl-[protein] + ATP = O-phospho-L-threonyl-[protein] + ADP + H(+). In terms of biological role, may play a role in signal transduction cascades in terminally differentiated cells. This is Cyclin-dependent kinase 18 (Cdk18) from Rattus norvegicus (Rat).